The chain runs to 362 residues: Porin Omp2b (362 aa).

Positions methionine 1–alanine 22 are cleaved as a signal peptide.

This sequence belongs to the alphaproteobacteria porin family. As to quaternary structure, homotrimer.

The protein resides in the cell outer membrane. Functionally, forms passive diffusion pores that allow small molecular weight hydrophilic materials across the outer membrane. This chain is Porin Omp2b (omp2b), found in Brucella melitensis biotype 1 (strain ATCC 23456 / CCUG 17765 / NCTC 10094 / 16M).